The primary structure comprises 161 residues: Phosphopantetheine adenylyltransferase (161 aa).

S10 lines the substrate pocket. ATP-binding positions include 10–11 (SF) and H18. Positions 42, 75, and 89 each coordinate substrate. Residues 90 to 92 (GLR), E100, and 125 to 131 (LSPISSS) each bind ATP.

This sequence belongs to the bacterial CoaD family. As to quaternary structure, homohexamer. Mg(2+) is required as a cofactor.

It is found in the cytoplasm. The catalysed reaction is (R)-4'-phosphopantetheine + ATP + H(+) = 3'-dephospho-CoA + diphosphate. The protein operates within cofactor biosynthesis; coenzyme A biosynthesis; CoA from (R)-pantothenate: step 4/5. Reversibly transfers an adenylyl group from ATP to 4'-phosphopantetheine, yielding dephospho-CoA (dPCoA) and pyrophosphate. The sequence is that of Phosphopantetheine adenylyltransferase from Streptococcus agalactiae serotype III (strain NEM316).